A 674-amino-acid polypeptide reads, in one-letter code: Penicillin-binding protein activator LpoA (674 aa).

A signal peptide spans 1–31 (MLSSTFVRTKAGRSKPVRLTAVIAAALFLAG). Cys32 is lipidated: N-palmitoyl cysteine. Residue Cys32 is the site of S-diacylglycerol cysteine attachment. Residues 291 to 349 (GVTPSTPVQQQQPASVPEQAAQPASTDPNANGAVSTSAPDAAPVTAAQPSAPSTAPITP) are disordered. The segment covering 292 to 315 (VTPSTPVQQQQPASVPEQAAQPAS) has biased composition (low complexity). Residues 316–328 (TDPNANGAVSTSA) show a composition bias toward polar residues. The segment covering 331–349 (AAPVTAAQPSAPSTAPITP) has biased composition (low complexity).

The protein belongs to the LpoA family. As to quaternary structure, interacts with PBP1a.

The protein resides in the cell outer membrane. In terms of biological role, regulator of peptidoglycan synthesis that is essential for the function of penicillin-binding protein 1A (PBP1a). The chain is Penicillin-binding protein activator LpoA from Serratia proteamaculans (strain 568).